A 181-amino-acid polypeptide reads, in one-letter code: uncharacterized protein (181 aa).

The N-terminal stretch at 1–22 is a signal peptide; sequence MNKKSLLVVLVIALAVVPFAAT.

This is an uncharacterized protein from Halorubrum pleomorphic virus 1 (HRPV-1).